A 194-amino-acid chain; its full sequence is Peptide deformylase (194 aa).

Positions aspartate 71 to valine 93 are disordered. Over residues glutamate 76 to valine 93 the composition is skewed to basic and acidic residues. The Fe cation site is built by cysteine 119 and histidine 161. Glutamate 162 is an active-site residue. Histidine 165 provides a ligand contact to Fe cation.

The protein belongs to the polypeptide deformylase family. It depends on Fe(2+) as a cofactor.

The enzyme catalyses N-terminal N-formyl-L-methionyl-[peptide] + H2O = N-terminal L-methionyl-[peptide] + formate. In terms of biological role, removes the formyl group from the N-terminal Met of newly synthesized proteins. Requires at least a dipeptide for an efficient rate of reaction. N-terminal L-methionine is a prerequisite for activity but the enzyme has broad specificity at other positions. The protein is Peptide deformylase of Erythrobacter litoralis (strain HTCC2594).